Consider the following 180-residue polypeptide: Large ribosomal subunit protein uL5 (180 aa).

It belongs to the universal ribosomal protein uL5 family. Part of the 50S ribosomal subunit; part of the 5S rRNA/L5/L18/L25 subcomplex. Contacts the 5S rRNA and the P site tRNA. Forms a bridge to the 30S subunit in the 70S ribosome.

This is one of the proteins that bind and probably mediate the attachment of the 5S RNA into the large ribosomal subunit, where it forms part of the central protuberance. In the 70S ribosome it contacts protein S13 of the 30S subunit (bridge B1b), connecting the 2 subunits; this bridge is implicated in subunit movement. Contacts the P site tRNA; the 5S rRNA and some of its associated proteins might help stabilize positioning of ribosome-bound tRNAs. In Streptococcus equi subsp. equi (strain 4047), this protein is Large ribosomal subunit protein uL5.